Consider the following 205-residue polypeptide: Small ribosomal subunit protein uS4 (205 aa).

A disordered region spans residues 21–47 (GRPKSPFNKRDYGPGQHGQGRKGKPSD). The 61-residue stretch at 94 to 154 (RRLDSVVYRA…DKSKQLAIID (61 aa)) folds into the S4 RNA-binding domain.

The protein belongs to the universal ribosomal protein uS4 family. In terms of assembly, part of the 30S ribosomal subunit. Contacts protein S5. The interaction surface between S4 and S5 is involved in control of translational fidelity.

One of the primary rRNA binding proteins, it binds directly to 16S rRNA where it nucleates assembly of the body of the 30S subunit. In terms of biological role, with S5 and S12 plays an important role in translational accuracy. This chain is Small ribosomal subunit protein uS4, found in Pelagibacter ubique (strain HTCC1062).